The sequence spans 278 residues: 4-deoxy-L-threo-5-hexosulose-uronate ketol-isomerase (278 aa).

Zn(2+) contacts are provided by His-196, His-198, Glu-203, and His-245.

The protein belongs to the KduI family. It depends on Zn(2+) as a cofactor.

It catalyses the reaction 5-dehydro-4-deoxy-D-glucuronate = 3-deoxy-D-glycero-2,5-hexodiulosonate. Its pathway is glycan metabolism; pectin degradation; 2-dehydro-3-deoxy-D-gluconate from pectin: step 4/5. Catalyzes the isomerization of 5-dehydro-4-deoxy-D-glucuronate to 3-deoxy-D-glycero-2,5-hexodiulosonate. The sequence is that of 4-deoxy-L-threo-5-hexosulose-uronate ketol-isomerase from Salmonella paratyphi A (strain ATCC 9150 / SARB42).